A 201-amino-acid chain; its full sequence is Holliday junction branch migration complex subunit RuvA (201 aa).

The interval 1–63 (MISHFSGTVS…EESLTLYGFV (63 aa)) is domain I. A domain II region spans residues 64-142 (EADDRDAFEL…ALAPRGASAS (79 aa)). The flexible linker stretch occupies residues 143 to 153 (GATHVAAPWRE). Positions 153 to 201 (EQVAEGLVGLGWSTKDAEKAVDKVVALKEADPAMSIGNLMRAALRSLAR) are domain III.

Belongs to the RuvA family. Homotetramer. Forms an RuvA(8)-RuvB(12)-Holliday junction (HJ) complex. HJ DNA is sandwiched between 2 RuvA tetramers; dsDNA enters through RuvA and exits via RuvB. An RuvB hexamer assembles on each DNA strand where it exits the tetramer. Each RuvB hexamer is contacted by two RuvA subunits (via domain III) on 2 adjacent RuvB subunits; this complex drives branch migration. In the full resolvosome a probable DNA-RuvA(4)-RuvB(12)-RuvC(2) complex forms which resolves the HJ.

The protein localises to the cytoplasm. Its function is as follows. The RuvA-RuvB-RuvC complex processes Holliday junction (HJ) DNA during genetic recombination and DNA repair, while the RuvA-RuvB complex plays an important role in the rescue of blocked DNA replication forks via replication fork reversal (RFR). RuvA specifically binds to HJ cruciform DNA, conferring on it an open structure. The RuvB hexamer acts as an ATP-dependent pump, pulling dsDNA into and through the RuvAB complex. HJ branch migration allows RuvC to scan DNA until it finds its consensus sequence, where it cleaves and resolves the cruciform DNA. In Cutibacterium acnes (strain DSM 16379 / KPA171202) (Propionibacterium acnes), this protein is Holliday junction branch migration complex subunit RuvA.